The sequence spans 443 residues: Ribosomal protein uS12 methylthiotransferase RimO (443 aa).

The MTTase N-terminal domain maps to 5-115; it reads PNIGFISLGC…VMKHVHKYVP (111 aa). Positions 14, 50, 79, 147, 151, and 154 each coordinate [4Fe-4S] cluster. Positions 133–374 constitute a Radical SAM core domain; that stretch reads LTPKHYAYLK…MQLQQKISAE (242 aa). Residues 377 to 443 form the TRAM domain; that stretch reads RQKIGRTLSV…ADEYDLWGEI (67 aa).

It belongs to the methylthiotransferase family. RimO subfamily. Requires [4Fe-4S] cluster as cofactor.

It localises to the cytoplasm. It catalyses the reaction L-aspartate(89)-[ribosomal protein uS12]-hydrogen + (sulfur carrier)-SH + AH2 + 2 S-adenosyl-L-methionine = 3-methylsulfanyl-L-aspartate(89)-[ribosomal protein uS12]-hydrogen + (sulfur carrier)-H + 5'-deoxyadenosine + L-methionine + A + S-adenosyl-L-homocysteine + 2 H(+). Its function is as follows. Catalyzes the methylthiolation of an aspartic acid residue of ribosomal protein uS12. The chain is Ribosomal protein uS12 methylthiotransferase RimO from Histophilus somni (strain 2336) (Haemophilus somnus).